We begin with the raw amino-acid sequence, 3032 residues long: Biorientation of chromosomes in cell division protein 1-like 1 (3032 aa).

Residues 1 to 31 are compositionally biased toward pro residues; sequence MATNPQPQPPPPAPPPPPPQPQPPPPPPGPG. 4 disordered regions span residues 1-48, 164-195, 214-397, and 409-465; these read MATN…GAGD, EEAA…SANV, NAAR…LDSD, and VHTS…RGVR. Gly residues predominate over residues 32 to 46; the sequence is AGPGASGPGSAGAGA. A compositionally biased stretch (polar residues) spans 234 to 243; the sequence is KLSSQPSTDV. Residues 244–261 are compositionally biased toward basic and acidic residues; it reads STDKERGSEDATEREKAT. Residue serine 264 is modified to Phosphoserine. Positions 310 to 391 are enriched in basic and acidic residues; it reads TDPKIKSMDK…RAAEGTKEDC (82 aa). A compositionally biased stretch (acidic residues) spans 416–441; it reads SFEEDTEEEVVVSESMEEGEITSEDE. Lysine 471 is modified (N6-acetyllysine). 2 positions are modified to phosphoserine: serine 480 and serine 482. Disordered regions lie at residues 480–1153, 1165–1296, 1309–1366, 1424–1491, 1675–1701, 1740–1858, and 1934–1978; these read SDSD…HKAT, MVDS…HNSN, GGRA…LSED, AAGE…SGRR, GSLS…TEGT, AKPQ…GHAS, and ALAG…ISTG. Composition is skewed to basic and acidic residues over residues 488–503 and 510–525; these read VEQR…EERL and REKL…EKTK. Lysine 534 carries the N6-acetyllysine modification. Composition is skewed to basic and acidic residues over residues 547–568 and 578–653; these read LEPK…EKKV and SRNV…EYKR. 2 positions are modified to phosphoserine: serine 632 and serine 656. Threonine 657 carries the post-translational modification Phosphothreonine. Basic and acidic residues-rich tracts occupy residues 668-736, 743-768, and 799-846; these read TDTR…DKPS, GDSV…ESVR, and RDGK…KLQK. Over residues 848-859 the composition is skewed to polar residues; that stretch reads ALSSKQHSVTSQ. 4 stretches are compositionally biased toward basic and acidic residues: residues 860–872, 934–960, 978–1015, and 1022–1069; these read KRSE…KCET, KPDK…RTSE, AQKD…DGHR, and SNKD…ENRR. The residue at position 1071 (serine 1071) is a Phosphoserine. The span at 1086 to 1096 shows a compositional bias: polar residues; that stretch reads MSGTTSSSSLQ. Phosphoserine is present on serine 1138. The span at 1272–1286 shows a compositional bias: low complexity; the sequence is STDSDLLSSSGSVTV. Polar residues predominate over residues 1312-1329; sequence ASTSLANHSDVPNQYSTV. A phosphoserine mark is found at serine 1315 and serine 1364. Composition is skewed to basic and acidic residues over residues 1428 to 1470 and 1479 to 1491; these read HVVD…RRDS and GKME…SGRR. Residues serine 1676 and serine 1685 each carry the phosphoserine modification. The segment covering 1958–1970 has biased composition (basic and acidic residues); the sequence is HHSDSQLTRKETV. A phosphoserine mark is found at serine 1989, serine 2001, serine 2092, and serine 2166. Positions 2082–2101 are disordered; that stretch reads PMPSAVSGENSQLTASRSEE. Polar residues predominate over residues 2088 to 2097; sequence SGENSQLTAS. Disordered regions lie at residues 2303–2322, 2370–2469, 2536–2559, and 2575–2596; these read EENQ…LATK, EPSV…HCLT, EGGL…EKMG, and DVTL…PPKG. Residues serine 2417 and serine 2443 each carry the phosphoserine modification. The segment covering 2449-2459 has biased composition (basic and acidic residues); it reads CLREPEQKPAE. A Phosphoserine modification is found at serine 2554. Serine 2681 carries the phosphoserine modification. Residues 2682-3032 are disordered; sequence TEALSGCSVE…DENPLKKAKR (351 aa). Composition is skewed to acidic residues over residues 2692 to 2701 and 2715 to 2725; these read ADPEEVEEEE and SSEEELDDSPD. Residues 2727–2750 show a composition bias toward basic and acidic residues; it reads LDSRIETAQRQYSETEPHDTKEEN. Positions 2758 to 2769 are enriched in polar residues; sequence SSVTSKTNSSTG. Residues 2782–2804 show a composition bias toward basic and acidic residues; that stretch reads TGEKTEPNEDDGSIKSQEDDHPI. The segment covering 2805-2815 has biased composition (basic residues); sequence IIKRRRGRPRK. Residues 2807 to 2819 constitute a DNA-binding region (a.T hook); it reads KRRRGRPRKYPAE. Basic and acidic residues predominate over residues 2822–2832; it reads FKSKEDSKTET. The span at 2833–2843 shows a compositional bias: polar residues; that stretch reads DITTVEQSSPS. 2 positions are modified to phosphoserine: serine 2840 and serine 2841. The segment covering 2853–2867 has biased composition (basic and acidic residues); it reads ESNKEIANLEEKSTS. Residue serine 2888 is modified to Phosphoserine. Threonine 2890 is subject to Phosphothreonine. Phosphoserine occurs at positions 2892, 2898, and 2907. Glycyl lysine isopeptide (Lys-Gly) (interchain with G-Cter in ubiquitin) cross-links involve residues lysine 2915 and lysine 2916. Acidic residues predominate over residues 2919-2932; that stretch reads ESDEEEEEEEEEEP. Position 2920 is a phosphoserine (serine 2920). Positions 2975–2987 are enriched in basic and acidic residues; it reads LAKEKLSTSEKVS. Phosphoserine is present on serine 3000. Positions 3020–3032 are enriched in basic and acidic residues; the sequence is QKVDENPLKKAKR.

The protein belongs to the BOD1 family. Interacts (via COMPASS-Shg1 domain) with SETD1A at stalled replication forks; this interaction mediates FANCD2-dependent nucleosome remodeling at reversed forks protecting them from nucleolytic degradation.

Its subcellular location is the chromosome. Component of the fork protection machinery required to protect stalled/damaged replication forks from uncontrolled DNA2-dependent resection. Acts by stabilizing RAD51 at stalled replication forks and protecting RAD51 nucleofilaments from the antirecombinogenic activities of FBH1 and BLM. Does not regulate spindle orientation. This is Biorientation of chromosomes in cell division protein 1-like 1 from Mus musculus (Mouse).